The sequence spans 550 residues: Warthog protein 8 (550 aa).

The signal sequence occupies residues 1–19 (MNYLLLVSGLLSVWQPVFG).

This sequence belongs to the hedgehog family. The C-terminal domain displays an autoproteolysis activity.

It localises to the secreted. It is found in the cell surface. The protein resides in the cell membrane. Its subcellular location is the extracellular space. Functionally, intercellular signal essential for a variety of patterning events during development. This chain is Warthog protein 8 (wrt-8), found in Caenorhabditis elegans.